We begin with the raw amino-acid sequence, 193 residues long: Transcriptional regulator RamR (193 aa).

In terms of domain architecture, HTH tetR-type spans 7–66 (EDKKQALLEAATQAIAQSGIAASTAVIARNAGVAEGTLFRYFATKDELINTLYLHLKQDL). The H-T-H motif DNA-binding region spans 29 to 48 (STAVIARNAGVAEGTLFRYF).

As to quaternary structure, homodimer. May bind DNA either as a homodimer or as a pair of homodimers. Various chemicals reduce DNA-binding in vitro, including bile acids, such as cholic and chenodeoxycholic acids, and antimicrobial drugs, such as berberine, crystal violet, dequalinium, ethidium bromide and rhodamine 6G. Binds small regulatory RNA StyR3.

Transcriptional regulator. Represses the transcription of the transcriptional activator RamA and, thereby, leads to repression of the expression of the efflux pump subunits AcrA and AcrB, and TolC. Acts by binding directly to the promoter region of the ramA gene. Promoter binding may be inhibited partially by the small regulatory RNA StyR3, perhaps thereby ensuring a basal level of expression of RamA. The polypeptide is Transcriptional regulator RamR (Salmonella typhimurium (strain LT2 / SGSC1412 / ATCC 700720)).